Consider the following 219-residue polypeptide: Envelope protein US9 homolog (219 aa).

The Intravirion portion of the chain corresponds to 1-193 (MEKAEAAAVV…RHRRRRVALT (193 aa)). The Di-leucine internalization motif signature appears at 145–146 (LL). The segment at 153–168 (DYDSESGCYYSESDNE) is acidic. A phosphoserine; by host CK2 mark is found at Ser163 and Ser165. The chain crosses the membrane as a helical; Signal-anchor for type II membrane protein span at residues 194 to 214 (VAGVILVVVLCAISGIVGAFL). Topologically, residues 215 to 219 (ARVFP) are virion surface.

It belongs to the alphaherpesvirinae envelope protein US9 family. In terms of processing, phosphorylated on serines within the acidic cluster. Phosphorylation determines whether endocytosed viral US9 traffics to the trans-Golgi network or recycles to the cell membrane.

The protein resides in the virion membrane. It localises to the host Golgi apparatus membrane. It is found in the host smooth endoplasmic reticulum membrane. Its subcellular location is the host cell membrane. Its function is as follows. Essential for the anterograde spread of the infection throughout the host nervous system. Together with the gE/gI heterodimer, US9 is involved in the sorting and transport of viral structural components toward axon tips. This chain is Envelope protein US9 homolog, found in Equine herpesvirus 1 (strain Ab4p) (EHV-1).